The sequence spans 423 residues: Probable peptidoglycan glycosyltransferase FtsW (423 aa).

The Cytoplasmic portion of the chain corresponds to 1 to 53 (MNLKEKLFPENRLGLNRFWNFSRGGIDNFRTGLRDAVSGVEQTRSRMMEYDQL). Residues 54–74 (LVWAILSLMLIGLVMVYSASI) form a helical membrane-spanning segment. Over 75–88 (TLADGPKYANYSSN) the chain is Periplasmic. Residues 89-109 (FFLIRHMISLAIAIGVGIWAF) form a helical membrane-spanning segment. Over 110–119 (KIPTKVWDRY) the chain is Cytoplasmic. The helical transmembrane segment at 120 to 140 (SPVIFGITVLLLIAVLIPGVG) threads the bilayer. Residues 141–149 (RGVNGAKRW) lie on the Periplasmic side of the membrane. Residues 150 to 170 (IPLGLMNFQSSELMKFAAVIF) traverse the membrane as a helical segment. The Cytoplasmic portion of the chain corresponds to 171–184 (AASYTVQRQEYLHS). A helical transmembrane segment spans residues 185 to 205 (FVKGMLPMGIAVALVGGLLMA). Topologically, residues 206–208 (EPD) are periplasmic. Residues 209–229 (MGAFVVVALIAFGILFLGGIN) traverse the membrane as a helical segment. At 230 to 231 (AK) the chain is on the cytoplasmic side. Residues 232 to 252 (LFGGLIAVGLMSGATMIAFSP) form a helical membrane-spanning segment. The Periplasmic segment spans residues 253 to 310 (LRRGRMLAFMDPWQVDNAANKGYQLTHSLMAFGRGEWFGTGLGGSVEKLHYLPEAHTD). The chain crosses the membrane as a helical span at residues 311 to 331 (FIMAVIGEELGFVGVVVMIFL). Topologically, residues 332–359 (FYWIVRRAFLIGRTALQLDRSFAGLAAK) are cytoplasmic. The chain crosses the membrane as a helical span at residues 360 to 380 (GVAIWIGWQAFINMGVNLGLL). Topologically, residues 381–386 (PTKGLT) are periplasmic. The helical transmembrane segment at 387 to 407 (LPLVSYGGSGILMNAVAMAML) threads the bilayer. Residues 408 to 423 (LRIDFENRILMRGGKL) lie on the Cytoplasmic side of the membrane.

It belongs to the SEDS family. FtsW subfamily.

The protein resides in the cell inner membrane. The enzyme catalyses [GlcNAc-(1-&gt;4)-Mur2Ac(oyl-L-Ala-gamma-D-Glu-L-Lys-D-Ala-D-Ala)](n)-di-trans,octa-cis-undecaprenyl diphosphate + beta-D-GlcNAc-(1-&gt;4)-Mur2Ac(oyl-L-Ala-gamma-D-Glu-L-Lys-D-Ala-D-Ala)-di-trans,octa-cis-undecaprenyl diphosphate = [GlcNAc-(1-&gt;4)-Mur2Ac(oyl-L-Ala-gamma-D-Glu-L-Lys-D-Ala-D-Ala)](n+1)-di-trans,octa-cis-undecaprenyl diphosphate + di-trans,octa-cis-undecaprenyl diphosphate + H(+). The protein operates within cell wall biogenesis; peptidoglycan biosynthesis. Peptidoglycan polymerase that is essential for cell division. This chain is Probable peptidoglycan glycosyltransferase FtsW, found in Polynucleobacter necessarius subsp. necessarius (strain STIR1).